A 158-amino-acid chain; its full sequence is 2-C-methyl-D-erythritol 2,4-cyclodiphosphate synthase (158 aa).

Residues Asp-9 and His-11 each coordinate a divalent metal cation. Residues 9-11 (DVH) and 35-36 (HS) each bind 4-CDP-2-C-methyl-D-erythritol 2-phosphate. His-43 contributes to the a divalent metal cation binding site. Residues 57 to 59 (DIG), 62 to 66 (FPDTD), 101 to 107 (AQAPKMA), 133 to 136 (TTTE), Phe-140, and Arg-143 each bind 4-CDP-2-C-methyl-D-erythritol 2-phosphate.

This sequence belongs to the IspF family. Homotrimer. A divalent metal cation serves as cofactor.

It carries out the reaction 4-CDP-2-C-methyl-D-erythritol 2-phosphate = 2-C-methyl-D-erythritol 2,4-cyclic diphosphate + CMP. The protein operates within isoprenoid biosynthesis; isopentenyl diphosphate biosynthesis via DXP pathway; isopentenyl diphosphate from 1-deoxy-D-xylulose 5-phosphate: step 4/6. Involved in the biosynthesis of isopentenyl diphosphate (IPP) and dimethylallyl diphosphate (DMAPP), two major building blocks of isoprenoid compounds. Catalyzes the conversion of 4-diphosphocytidyl-2-C-methyl-D-erythritol 2-phosphate (CDP-ME2P) to 2-C-methyl-D-erythritol 2,4-cyclodiphosphate (ME-CPP) with a corresponding release of cytidine 5-monophosphate (CMP). This chain is 2-C-methyl-D-erythritol 2,4-cyclodiphosphate synthase, found in Vibrio vulnificus (strain CMCP6).